Consider the following 358-residue polypeptide: Chondroadherin (358 aa).

Residues 1 to 20 (MARVLLLSLVFLAILLPALA) form the signal peptide. Residues 21 to 50 (ACPQNCHCHGDLQHVICDKVGLQKIPKVSE) enclose the LRRNT domain. Cys-22 and Cys-37 form a disulfide bridge. 10 LRR repeats span residues 51–72 (TTKL…SFRT), 75–96 (NLVS…AFRG), 99–120 (QLIY…AFDD), 123–144 (ELTY…LLSP), 147–168 (NLFI…AFQG), 171–192 (DLRW…SLDD), 195–216 (NLAK…ALSK), 219–240 (VVEE…AFQS), 244–265 (YLET…AFAG), and 268–289 (TLKH…FPFD). An O-linked (GalNAc...) serine glycan is attached at Ser-143. The LRRCT domain occupies 299-347 (NPWKCTCQLRGLRRWLEAKTSRPDATCSSPAKFKGQRIRDTDALRSCKS). Disulfide bonds link Cys-303–Cys-345 and Cys-305–Cys-325. The tract at residues 321–358 (PDATCSSPAKFKGQRIRDTDALRSCKSPTKRSKKAGRH) is disordered. A compositionally biased stretch (basic residues) spans 348-358 (PTKRSKKAGRH).

The protein belongs to the small leucine-rich proteoglycan (SLRP) family. SLRP class IV subfamily. As to quaternary structure, mostly monomeric. In terms of tissue distribution, present in femoral head and rib cartilage, as well as in tendon. Detected in bone marrow.

The protein resides in the secreted. It localises to the extracellular space. It is found in the extracellular matrix. In terms of biological role, promotes attachment of chondrocytes, fibroblasts, and osteoblasts. This binding is mediated (at least for chondrocytes and fibroblasts) by the integrin alpha(2)beta(1). May play an important role in the regulation of chondrocyte growth and proliferation. In Rattus norvegicus (Rat), this protein is Chondroadherin (Chad).